Here is a 415-residue protein sequence, read N- to C-terminus: tRNA(Ile2) 2-agmatinylcytidine synthetase TiaS (415 aa).

It belongs to the TiaS family.

It is found in the cytoplasm. It carries out the reaction cytidine(34) in tRNA(Ile2) + agmatine + ATP + H2O = 2-agmatinylcytidine(34) in tRNA(Ile2) + AMP + 2 phosphate + 2 H(+). ATP-dependent agmatine transferase that catalyzes the formation of 2-agmatinylcytidine (agm2C) at the wobble position (C34) of tRNA(Ile2), converting the codon specificity from AUG to AUA. In Pyrobaculum neutrophilum (strain DSM 2338 / JCM 9278 / NBRC 100436 / V24Sta) (Thermoproteus neutrophilus), this protein is tRNA(Ile2) 2-agmatinylcytidine synthetase TiaS.